The following is a 118-amino-acid chain: Ribonuclease P protein component (118 aa).

Belongs to the RnpA family. In terms of assembly, consists of a catalytic RNA component (M1 or rnpB) and a protein subunit.

The enzyme catalyses Endonucleolytic cleavage of RNA, removing 5'-extranucleotides from tRNA precursor.. In terms of biological role, RNaseP catalyzes the removal of the 5'-leader sequence from pre-tRNA to produce the mature 5'-terminus. It can also cleave other RNA substrates such as 4.5S RNA. The protein component plays an auxiliary but essential role in vivo by binding to the 5'-leader sequence and broadening the substrate specificity of the ribozyme. The protein is Ribonuclease P protein component of Bifidobacterium animalis subsp. lactis (strain AD011).